Here is a 261-residue protein sequence, read N- to C-terminus: Ribosomal RNA small subunit methyltransferase J (261 aa).

Residues 111–112 (RD), 127–128 (ER), 163–164 (SS), and Asp-181 contribute to the S-adenosyl-L-methionine site.

This sequence belongs to the methyltransferase superfamily. RsmJ family.

The protein localises to the cytoplasm. It carries out the reaction guanosine(1516) in 16S rRNA + S-adenosyl-L-methionine = N(2)-methylguanosine(1516) in 16S rRNA + S-adenosyl-L-homocysteine + H(+). In terms of biological role, specifically methylates the guanosine in position 1516 of 16S rRNA. This chain is Ribosomal RNA small subunit methyltransferase J, found in Shewanella sp. (strain MR-7).